The primary structure comprises 451 residues: Probable glycine dehydrogenase (decarboxylating) subunit 1 (451 aa).

The protein belongs to the GcvP family. N-terminal subunit subfamily. As to quaternary structure, the glycine cleavage system is composed of four proteins: P, T, L and H. In this organism, the P 'protein' is a heterodimer of two subunits.

It carries out the reaction N(6)-[(R)-lipoyl]-L-lysyl-[glycine-cleavage complex H protein] + glycine + H(+) = N(6)-[(R)-S(8)-aminomethyldihydrolipoyl]-L-lysyl-[glycine-cleavage complex H protein] + CO2. In terms of biological role, the glycine cleavage system catalyzes the degradation of glycine. The P protein binds the alpha-amino group of glycine through its pyridoxal phosphate cofactor; CO(2) is released and the remaining methylamine moiety is then transferred to the lipoamide cofactor of the H protein. In Staphylococcus aureus (strain MSSA476), this protein is Probable glycine dehydrogenase (decarboxylating) subunit 1.